The following is a 784-amino-acid chain: MEVSLTAGAIGKIMNGEVTTEADMIPVLQVTDLKQIMAQQDPTRERFRMVLSDGTYLHQGMLGTDLNNLVKEGTLQPGSIVRLTRFVGDVIKGRRIVIVPQLEVLKQISDIIGHPVPGGKHNDQRGADSGIKFNTTEQQGSGIRQVNNIEPGRSNAAISPQVGGTGSSVPASTTPSTRAYSNPSSGNGVTRQDYARDPPTSYPHQPQPPPPMYANRGPVARNEAPPKIIPVNALSPYSGRWTIKARVTNKAALKQYSNPRGEGKVFNFDLLDADGGEIRVTCFNAVADQFYDQIVVGNLYLISRGSLRPAQKNFNHLRNDYEIMLDNASTIKQCYEEDAAIPRHQFHFRTIGDIESMENNCIVDVIGIVSSISPTVTITRKNGTATPKRSLQLKDMSGRSVEVTMWGDFCNAEGQRLQSLCDSGVFPVLAVKAGRISEFNGKTVSTIGSSQLFIDPDFVEAEKLKNWFEREGKSVPCISLSREFSGSGKVDVRKTISQIKDEKLGTSEKPDWITVSATILYLKFDNFCYTACPIMNGDRPCSKKVTDNGDGTWRCEKCDKSVDECDYRYILQLQIQDHTDLTCVTAFQEAGEEIMGISAKDLYYVKNEHKDEEKFEDIIRKVAFTKYNFKLKVKEETFSDEQRVKATVVKVDKLNYSADTRTMLGAMDKLRTRDANSLPINPEGSDYNADVVNTGIGSSGTRDPSSVQRRDFGLHAHQSGQSGNHYSGGGATTSCNVCGNSGHVSAKCPGATKPQEQGQYMGGSYRGTTGSYGGGLPRQHVGSY.

The tract at residues 114 to 224 is disordered; that stretch reads HPVPGGKHND…NRGPVARNEA (111 aa). Composition is skewed to polar residues over residues 132–148 and 167–190; these read KFNTTEQQGSGIRQVNN and SSVPASTTPSTRAYSNPSSGNGVT. Residues 241 to 327 constitute a DNA-binding region (OB); it reads WTIKARVTNK…RNDYEIMLDN (87 aa). A C4-type zinc finger spans residues 532 to 558; it reads CPIMNGDRPCSKKVTDNGDGTWRCEKC. Disordered stretches follow at residues 678 to 707 and 746 to 784; these read LPINPEGSDYNADVVNTGIGSSGTRDPSSV and AKCPGATKPQEQGQYMGGSYRGTTGSYGGGLPRQHVGSY. The span at 695–707 shows a compositional bias: polar residues; it reads GIGSSGTRDPSSV. Gly residues predominate over residues 760–776; sequence YMGGSYRGTTGSYGGGL.

This sequence belongs to the replication factor A protein 1 family. As to quaternary structure, heterotrimer of RPA1, RPA2 and RPA3 (canonical replication protein A complex).

The protein localises to the nucleus. Functionally, component of the replication protein A complex (RPA) required for DNA recombination, repair and replication. The activity of RPA is mediated by single-stranded DNA binding and protein interactions. Probably involved in repair of double-strand DNA breaks (DSBs) induced by genotoxic stresses. The sequence is that of Replication protein A 70 kDa DNA-binding subunit E (RPA1E) from Arabidopsis thaliana (Mouse-ear cress).